The sequence spans 390 residues: Homeobox protein Meis1 (390 aa).

Positions 108–192 (GGDVCSSESF…IDLVIDDREG (85 aa)) constitute an MEIS N-terminal domain. Residues 190–202 (REGGSKSDSEDIT) are compositionally biased toward basic and acidic residues. Residues 190–279 (REGGSKSDSE…KKRHKKRGIF (90 aa)) form a disordered region. Over residues 203–213 (RSANLTDQPSW) the composition is skewed to polar residues. Residues 272-334 (RHKKRGIFPK…NARRRIVQPM (63 aa)) constitute a DNA-binding region (homeobox; TALE-type). Positions 299 to 329 (YPSEEQKKQLAQDTGLTILQVNNWFINARRR) are interaction with DNA. The segment at 335 to 390 (IDQSNRAVSQGTPYNPDGQPMGGFVMDGQQHMGIRAPGPMSGMGMNMGMEGQWHYM) is required for transcriptional activation.

The protein belongs to the TALE/MEIS homeobox family. Interacts with the N-terminal region of PBX1 to form a heterodimer which binds DNA including a cAMP-responsive sequence in CYP17. Also forms heterodimers with PBX2. Forms heterotrimers with PBX1 or PBX2 and a number of HOX proteins including HOXA9, HOXD4 and HOXD9 where it acts as a non-DNA-binding partner. Also forms heterotrimers with PBX1 and HOX proteins including HOXD9 and HOXD10 where PBX1 is the non-DNA-binding partner. Heterodimer with DLX3. Heterodimer with HOXB13. Expressed at low level in normal immunohepatopoietic tissues, including the fetal liver. Expressed in a subset of myeloid leukemia cell lines, with the highest expression seen in those with a megakaryocytic-erythroid phenotype. Also expressed at high levels in the cerebellum.

Its subcellular location is the nucleus. Acts as a transcriptional regulator of PAX6. Acts as a transcriptional activator of PF4 in complex with PBX1 or PBX2. Required for hematopoiesis, megakaryocyte lineage development and vascular patterning. May function as a cofactor for HOXA7 and HOXA9 in the induction of myeloid leukemias. This is Homeobox protein Meis1 (MEIS1) from Homo sapiens (Human).